A 292-amino-acid polypeptide reads, in one-letter code: MARCERLRGAALRDVLGQAQGVLFDCDGVLWNGERIVPGAPELLQRLARAGKNTLFVSNNSRRARPELALRFARLGFAGLRAEQLFSSALCAARLLRQRLSGPPDASGAVFVLGGEGLRAELRAAGLRLAGDPGEDPRVRAVLVGYDEQFSFSRLTEACAHLRDPDCLLVATDRDPWHPLSDGSRTPGTGSLAAAVETASGRQALVVGKPSPYMFQCITEDFSVDPARTLMVGDRLETDILFGHRCGMTTVLTLTGVSSLEEAQAYLTAGQRDLVPHYYVESIADLMEGLED.

The Nucleophile role is filled by D25. Mg(2+) is bound by residues D25 and D27. The Proton donor role is filled by D27. Substrate is bound by residues 58 to 60 (SNN), H178, and K209. D234 serves as a coordination point for Mg(2+).

This sequence belongs to the HAD-like hydrolase superfamily. In terms of assembly, homodimer. Mg(2+) serves as cofactor. Ubiquitous. highly expressed in brain (at protein level).

It localises to the cytoplasm. The protein localises to the cytosol. Its subcellular location is the cytoskeleton. The protein resides in the cell projection. It is found in the ruffle membrane. It localises to the lamellipodium membrane. The protein localises to the cell membrane. It carries out the reaction pyridoxal 5'-phosphate + H2O = pyridoxal + phosphate. The enzyme catalyses pyridoxine 5'-phosphate + H2O = pyridoxine + phosphate. The catalysed reaction is pyridoxamine + phosphate = pyridoxamine 5'-phosphate + H2O. It catalyses the reaction O-phospho-L-seryl-[protein] + H2O = L-seryl-[protein] + phosphate. Inhibited by beryllium trifluoride. Its function is as follows. Functions as a pyridoxal phosphate (PLP) phosphatase, which also catalyzes the dephosphorylation of pyridoxine 5'-phosphate (PNP) and pyridoxamine 5'-phosphate (PMP), with order of substrate preference PLP &gt; PNP &gt; PMP and therefore plays a role in vitamin B6 metabolism. Also functions as a protein serine phosphatase that specifically dephosphorylates 'Ser-3' in proteins of the actin-depolymerizing factor (ADF)/cofilin family like CFL1 and DSTN. Thereby, regulates cofilin-dependent actin cytoskeleton reorganization, being required for normal progress through mitosis and normal cytokinesis. Does not dephosphorylate phosphothreonines in LIMK1. Does not dephosphorylate peptides containing phosphotyrosine. The sequence is that of Chronophin from Mus musculus (Mouse).